The sequence spans 754 residues: C2H2 finger domain transcription factor crzA (754 aa).

5 disordered regions span residues 1–51 (MASQ…TVTG), 63–150 (SFAN…FSDL), 187–227 (VHQQ…QGST), 269–299 (QGHRRAPSEVSEISSAAPSPYLSQHESFDGV), and 384–543 (GAEG…RVQK). The span at 30-44 (HQQQQQQQHQQHQGQ) shows a compositional bias: low complexity. Polar residues-rich tracts occupy residues 63–80 (SFANSSFDPNSNNVSPSA) and 94–114 (TPASQTDQNYANSLQIPQSYG). Low complexity predominate over residues 130–140 (QQQSQQQHHQQ). A compositionally biased stretch (polar residues) spans 141-150 (PSLDDNFSDL). The span at 189–209 (QQSHPTQIPSSHSSTSPQISP) shows a compositional bias: low complexity. 2 stretches are compositionally biased toward polar residues: residues 210 to 227 (LEQQQHSSPGPMSTQGST) and 279 to 293 (SEISSAAPSPYLSQH). 2 stretches are compositionally biased toward low complexity: residues 459–472 (STSRLRSSSTSSSL) and 491–515 (RQQQSNPSSRDPSPSRSNRRLSTSS). C2H2-type zinc fingers lie at residues 548 to 570 (FQCNLCPKRFTRAYNLRSHLRTH) and 576 to 598 (FVCTVCGKAFARQHDRKRHEGLH). Residues 604-635 (FVCQGELSRGGQWGCGRRFARADALGRHFRSE) form a C2H2-type 3; degenerate zinc finger. Positions 708-737 (ADDPSDIGGRSSFDASSGNEFGFEDDDSGL) are disordered.

It localises to the nucleus. It is found in the cytoplasm. Its function is as follows. Transcription factor involved in the regulation of calcium ion homeostasis. Regulates genes encoding calcium transporters, transcription factors and genes that could be directly or indirectly involved in calcium metabolism. Supports especially pmcA, pmcB and pmcC expression encoding for calcium-translocating P-type ATPases. Binds target promoters at motif A[GT][CG]CA[AC][AG]. Plays an essential role germination, radial growth, and asexual development. Also plays a major role in proper chitin and glucan incorporation into the cell wall. Involved in the high-osmolarity glycerol response (HOG) signaling pathway. Required for pathogenicity in an experimental murine model of invasive pulmonary aspergillosis. This chain is C2H2 finger domain transcription factor crzA, found in Aspergillus fumigatus (strain ATCC MYA-4609 / CBS 101355 / FGSC A1100 / Af293) (Neosartorya fumigata).